Here is a 392-residue protein sequence, read N- to C-terminus: MKCGNGIEARQVNELFINVDPIQAGGRLTGDAIKAIIAYGDGYSVCDNCRKPNRLDCIAKPPIAEFHKDVAAWLNMDAARMMPGARRGFQAVAHTYVSKGNPVLLTSLSHYTEFLAVEGAGGVACEIPADSNHLVTPDAAAAKIEEVKQKFGKAPVLAIIDHVDYQYGNLHDFAGIAKVAHQYDVPVLYNGAYTVGTMPVDGKVIGADFIVGSGHKSMASPAPSGVLATTAERAKEVFRTTGITGDVTGRKFGIKEPELMGCTLMGATLVGMMASFPHVKERVKHFDKELVNNRIVMEALLSIEGTKILSEYPRKHTLTRVDTTGSFDRVAETHKKKGFYFSSALNDKGIFGLIPGATRIWKFNTYGMTEKQTRYLADAFVAVAQENGLPVK.

Pyridoxal 5'-phosphate-binding positions include 85–86, Asn-190, and 213–215; these read AR and SGH. The residue at position 216 (Lys-216) is an N6-(pyridoxal phosphate)lysine.

It belongs to the SepCysS family. In terms of assembly, homodimer. Interacts with SepRS. Pyridoxal 5'-phosphate serves as cofactor.

The catalysed reaction is O-phospho-L-seryl-tRNA(Cys) + hydrogen sulfide + H(+) = L-cysteinyl-tRNA(Cys) + phosphate. Its function is as follows. Converts O-phospho-L-seryl-tRNA(Cys) (Sep-tRNA(Cys)) to L-cysteinyl-tRNA(Cys) (Cys-tRNA(Cys)). The polypeptide is O-phospho-L-seryl-tRNA:Cys-tRNA synthase 1 (Methanoregula boonei (strain DSM 21154 / JCM 14090 / 6A8)).